The primary structure comprises 567 residues: Pyruvate decarboxylase (567 aa).

Residues aspartate 28 and histidine 117 each contribute to the pyruvate site. Thiamine diphosphate is bound by residues threonine 393 and glycine 416–isoleucine 418. A Mg(2+)-binding site is contributed by aspartate 447. Thiamine diphosphate contacts are provided by residues glycine 448–serine 449 and asparagine 475–isoleucine 480. Mg(2+)-binding residues include asparagine 475 and glycine 477. A pyruvate-binding site is contributed by glutamate 481.

The protein belongs to the TPP enzyme family. As to quaternary structure, homotetramer. Requires Mg(2+) as cofactor. Thiamine diphosphate serves as cofactor.

The protein localises to the cytoplasm. It catalyses the reaction a 2-oxocarboxylate + H(+) = an aldehyde + CO2. It carries out the reaction pyruvate + H(+) = acetaldehyde + CO2. This is Pyruvate decarboxylase (PDC11) from Candida albicans (strain SC5314 / ATCC MYA-2876) (Yeast).